A 960-amino-acid chain; its full sequence is Vacuolar membrane protease (960 aa).

Topologically, residues 1–57 (MADNNSSSGSLVIDEQDYDVHEAGQQGQQGQQKHQQRQQERPSLITRVFRSVFGYRK) are cytoplasmic. Positions 22–41 (EAGQQGQQGQQKHQQRQQER) are disordered. Positions 24-33 (GQQGQQGQQK) are enriched in low complexity. A helical membrane pass occupies residues 58-78 (TSLSLFVVATIALCVSLSYID). Residues 79–401 (NSVDFISFPT…FTISTSQLFK (323 aa)) are Vacuolar-facing. Residue Asn148 is glycosylated (N-linked (GlcNAc...) asparagine). Zn(2+)-binding residues include His189 and Asp201. Glu235 serves as the catalytic Proton acceptor. Zn(2+)-binding residues include Glu236, Glu261, and His333. The helical transmembrane segment at 402-422 (INVALLTVFPILNGLLLLYTI) threads the bilayer. Residues 423-432 (RSRKWQVSFS) lie on the Cytoplasmic side of the membrane. A helical transmembrane segment spans residues 433 to 453 (SAISIPVALLVTMFIVVYLVV). Over 454 to 476 (ESYKSFNQYLPSSRPLLLVATIT) the chain is Vacuolar. Residues 477-497 (SILLLVFSIILVAFSFFSIIA) form a helical membrane-spanning segment. The Cytoplasmic segment spans residues 498 to 502 (EENLR). Residues 503-523 (LLAIVELSFAYWVGLAFTTHG) form a helical membrane-spanning segment. Over 524–535 (LSGAESARHSGE) the chain is Vacuolar. The chain crosses the membrane as a helical span at residues 536–556 (FAVSILFTLEAVASFLGLIGW). Over 557 to 635 (SLCRNRSHLQ…FGYDWSLQYL (79 aa)) the chain is Cytoplasmic. Basic and acidic residues predominate over residues 587-605 (NDHDHEHRHGHEDNEHGEA). The interval 587–614 (NDHDHEHRHGHEDNEHGEAHVQQQSQSR) is disordered. Residues 636 to 656 (ITVPLSIFIIYNSGWLVLEGV) traverse the membrane as a helical segment. An N-linked (GlcNAc...) asparagine glycan is attached at Asn657. Residues 657 to 668 (NKTLQESAKAET) are Vacuolar-facing. The chain crosses the membrane as a helical span at residues 669–689 (FVYNLLWIVSVSLVLPLIPFA). Topologically, residues 690 to 696 (GKLNRYM) are cytoplasmic. A helical transmembrane segment spans residues 697–717 (VFVLIAIGVLGTLLVHVVQPF). Over 718-960 (NEANPLKLRF…LVAYTKQVHV (243 aa)) the chain is Vacuolar. 5 N-linked (GlcNAc...) asparagine glycosylation sites follow: Asn736, Asn763, Asn803, Asn875, and Asn921.

It belongs to the peptidase M28 family. Zn(2+) serves as cofactor.

The protein localises to the vacuole membrane. Its function is as follows. May be involved in vacuolar sorting and osmoregulation. This chain is Vacuolar membrane protease, found in Lodderomyces elongisporus (strain ATCC 11503 / CBS 2605 / JCM 1781 / NBRC 1676 / NRRL YB-4239) (Yeast).